The following is a 298-amino-acid chain: Protoheme IX farnesyltransferase (298 aa).

The next 9 membrane-spanning stretches (helical) occupy residues 29 to 49 (LIVF…PPLL), 51 to 71 (FGVA…LNCL), 97 to 117 (ETVT…HGFI), 120 to 140 (LTMW…TLIL), 148 to 168 (IVIG…AMTG), 175 to 195 (LVLF…LACY), 221 to 241 (ILWY…LGMS), 243 to 263 (GFYL…AIAL), and 278 to 298 (YSIL…LIVL).

It belongs to the UbiA prenyltransferase family. Protoheme IX farnesyltransferase subfamily.

The protein localises to the cell inner membrane. The enzyme catalyses heme b + (2E,6E)-farnesyl diphosphate + H2O = Fe(II)-heme o + diphosphate. Its pathway is porphyrin-containing compound metabolism; heme O biosynthesis; heme O from protoheme: step 1/1. Converts heme B (protoheme IX) to heme O by substitution of the vinyl group on carbon 2 of heme B porphyrin ring with a hydroxyethyl farnesyl side group. This is Protoheme IX farnesyltransferase from Dechloromonas aromatica (strain RCB).